The primary structure comprises 100 residues: MIREERLLKVLRAPHVSEKASAAMEKSNTIVLKVAKDATKAEIKAAVQKLFEVEVEVVNTLVVKGKTKRHGQRIGRRSDWKKAYVTLKEGQNLDFVGGAE.

Belongs to the universal ribosomal protein uL23 family. Part of the 50S ribosomal subunit. Contacts protein L29, and trigger factor when it is bound to the ribosome.

Functionally, one of the early assembly proteins it binds 23S rRNA. One of the proteins that surrounds the polypeptide exit tunnel on the outside of the ribosome. Forms the main docking site for trigger factor binding to the ribosome. In Pectobacterium atrosepticum (strain SCRI 1043 / ATCC BAA-672) (Erwinia carotovora subsp. atroseptica), this protein is Large ribosomal subunit protein uL23.